The following is an 82-amino-acid chain: uncharacterized protein (82 aa).

Could be a silencing control element for the regulation of the restriction system. This is an uncharacterized protein from Herpetosiphon aurantiacus (Herpetosiphon giganteus).